The following is a 173-amino-acid chain: Sterile alpha motif domain-containing protein 5 (173 aa).

In terms of domain architecture, SAM spans 1-65 (MCTNIVYEWL…LEAVRRLREQ (65 aa)). Residues 75–119 (TLEPQPAPPGPPADAVPTGRRGEPCGGPAQGTRGDSRGHTTAPRS) form a disordered region. Residues 79–88 (QPAPPGPPAD) are compositionally biased toward pro residues.

As to quaternary structure, interacts promiscuously (via SAM domain) with EPHA5, EPHA6, EPHA7, EPHA8, EPHB1, EPHB2, EPHB3 and EPHB4 (via SAM domain) (in vitro). As to expression, detected in biliary epithelial cells on bile ducts at the hepatic hilum (at protein level).

It localises to the cytoplasm. The protein is Sterile alpha motif domain-containing protein 5 (SAMD5) of Homo sapiens (Human).